The following is a 106-amino-acid chain: uncharacterized protein (106 aa).

This is an uncharacterized protein from Homo sapiens (Human).